The sequence spans 379 residues: Succinyl-diaminopimelate desuccinylase (379 aa).

H70 serves as a coordination point for Zn(2+). The active site involves D72. D103 contacts Zn(2+). E137 serves as the catalytic Proton acceptor. Positions 138, 166, and 352 each coordinate Zn(2+).

It belongs to the peptidase M20A family. DapE subfamily. As to quaternary structure, homodimer. Zn(2+) is required as a cofactor. The cofactor is Co(2+).

The catalysed reaction is N-succinyl-(2S,6S)-2,6-diaminopimelate + H2O = (2S,6S)-2,6-diaminopimelate + succinate. Its pathway is amino-acid biosynthesis; L-lysine biosynthesis via DAP pathway; LL-2,6-diaminopimelate from (S)-tetrahydrodipicolinate (succinylase route): step 3/3. Functionally, catalyzes the hydrolysis of N-succinyl-L,L-diaminopimelic acid (SDAP), forming succinate and LL-2,6-diaminopimelate (DAP), an intermediate involved in the bacterial biosynthesis of lysine and meso-diaminopimelic acid, an essential component of bacterial cell walls. The sequence is that of Succinyl-diaminopimelate desuccinylase from Paraburkholderia xenovorans (strain LB400).